The chain runs to 636 residues: Nucleolar protein 9 (636 aa).

Residues 1 to 59 (MGQGPRSPHKVGRRFPAGGKRGRGAKGSGRPLPGRKRQPWPPPDGRSEPAPDSHPHLSP) are disordered. The residue at position 7 (serine 7) is a Phosphoserine. Basic and acidic residues predominate over residues 45 to 57 (GRSEPAPDSHPHL). Pumilio repeat units follow at residues 92 to 123 (EVET…KPLC) and 189 to 223 (EVCD…ESER). Residues 222-241 (ERARPRGSQSSEAQKTPAQE) form a disordered region. Residues 228–238 (GSQSSEAQKTP) are compositionally biased toward polar residues. Pumilio repeat units follow at residues 313 to 348 (SVDG…QSLF), 351 to 386 (HLQG…SPVF), 509 to 544 (LTGP…RRRV), and 547 to 581 (NLKG…KEIA).

Belongs to the NOP9 family.

The polypeptide is Nucleolar protein 9 (NOP9) (Homo sapiens (Human)).